The chain runs to 234 residues: Nuclear transcription factor Y subunit B-6 (234 aa).

Disordered regions lie at residues 1 to 21 (MERGGFHGYRKLSVNNTTPSP) and 35 to 55 (MRPPEFNQPNKTSNGGEEECT). Residues 63–69 (MPIANVI) mediate DNA binding. Residues 90-101 (IQECVSEYISFI) are subunit association domain (SAD). The segment at 206–234 (NEPNSKMSGSSSGASGARVEVFPTQQHKY) is disordered. Over residues 213-222 (SGSSSGASGA) the composition is skewed to low complexity.

Belongs to the NFYB/HAP3 subunit family. As to quaternary structure, heterotrimeric transcription factor composed of three components, NF-YA, NF-YB and NF-YC. NF-YB and NF-YC must interact and dimerize for NF-YA association and DNA binding. Interacts with PRN1. Binds directly with DPB3-1. As to expression, expressed in roots, flowers and developing siliques. Present in etiolated seedlings.

The protein resides in the nucleus. Functionally, component of the NF-Y/HAP transcription factor complex. The NF-Y complex stimulates the transcription of various genes by recognizing and binding to a CCAAT motif in promoters. Plays a role in the regulation of the embryogenesis. Involved in the abscisic acid (ABA) signaling pathway. This Arabidopsis thaliana (Mouse-ear cress) protein is Nuclear transcription factor Y subunit B-6.